Consider the following 399-residue polypeptide: Phosphoglycerate kinase (399 aa).

Residues 20-22 (DFN), Arg-35, 58-61 (HLGR), Arg-117, and Arg-154 each bind substrate. ATP-binding positions include Lys-204, Gly-295, Glu-326, and 355–358 (GGDS).

The protein belongs to the phosphoglycerate kinase family. In terms of assembly, monomer.

It localises to the cytoplasm. The catalysed reaction is (2R)-3-phosphoglycerate + ATP = (2R)-3-phospho-glyceroyl phosphate + ADP. The protein operates within carbohydrate degradation; glycolysis; pyruvate from D-glyceraldehyde 3-phosphate: step 2/5. The polypeptide is Phosphoglycerate kinase (Beutenbergia cavernae (strain ATCC BAA-8 / DSM 12333 / CCUG 43141 / JCM 11478 / NBRC 16432 / NCIMB 13614 / HKI 0122)).